The following is a 97-amino-acid chain: Ferredoxin-like protein (97 aa).

Positions 56 to 86 constitute a 4Fe-4S ferredoxin-type domain; the sequence is GQVEVIADGCMECGTCRVLCEESGDIDWSYP.

It to ferredoxins from P.putida and C.tartarivorum, ferredoxin I from A.vinelandii, ferredoxin II from D.desulfuricans.

Could be a 3Fe-4S cluster-containing protein. This is Ferredoxin-like protein (fixX) from Sinorhizobium fredii (strain NBRC 101917 / NGR234).